Here is a 442-residue protein sequence, read N- to C-terminus: UPF0489 protein C5orf22 homolog (442 aa).

The disordered stretch occupies residues 175-208 (SSAKKPKLALEDSRNTASTNCDSSSEGLEKDTAT). Polar residues predominate over residues 189–200 (NTASTNCDSSSE).

Belongs to the UPF0489 family.

This chain is UPF0489 protein C5orf22 homolog, found in Pongo abelii (Sumatran orangutan).